A 125-amino-acid chain; its full sequence is uncharacterized protein (125 aa).

This is an uncharacterized protein from Dictyostelium discoideum (Social amoeba).